Reading from the N-terminus, the 259-residue chain is Activator of lactoyl-CoA dehydratase (259 aa).

The [4Fe-4S] cluster site is built by cysteine 125 and cysteine 164.

In terms of assembly, homodimer. [4Fe-4S] cluster serves as cofactor.

In terms of biological role, required for the activation of lactoyl-CoA dehydratase. This protein is extremely sensitive towards oxygen. The protein is Activator of lactoyl-CoA dehydratase (lcdC) of Anaerotignum propionicum (Clostridium propionicum).